The following is a 526-amino-acid chain: MSTTVRPDEVSSILRKQLANFESEADVYDVGTVLQVGDGIARVYGLTKVAAGELLEFPNNVMGMALNLEEDNVGAVLFGESTMVKEGDTVKRSGILASIPVGEAMLGRVINPLGEPIDGKGPIDAKLRLPLERRAPGVIYRKSVHEPLQTGLKAIDAMIPVGRGQRELIIGDRQTGKTAVALDTIINQKGKGVFCIYVAIGLKGSTIAQVVSTLEKYDALSYTTVIAATASDPAPLQFIAPFAGATLGEYFRDTGRHALVIYDDLSKQAVSYRQVSLLLRRPPGREAYPGDVFYLHSRLLERAAKITDDVEVAKKMNDLPDALKPLVKGGGSLTALPIIETQAGDVSAYIPTNVISITDGQIFLESNLFNSGQRPAINVGISVSRVGGAAQIKAMKKIAGTLRLDLAQFRELEAFSKFGSDLDKTTKAQLDRGARLVEILKQGQYVPMPVEKQVAIIFVGTQGLLDSVDLKFIRKCEEEFLAMLEMKHADILSGIAEKGTLEADVASKLKDIATKFIATFKEKNKA.

Position 171–178 (171–178) interacts with ATP; the sequence is GDRQTGKT.

The protein belongs to the ATPase alpha/beta chains family. In terms of assembly, F-type ATPases have 2 components, CF(1) - the catalytic core - and CF(0) - the membrane proton channel. CF(1) has five subunits: alpha(3), beta(3), gamma(1), delta(1), epsilon(1). CF(0) has four main subunits: a(1), b(1), b'(1) and c(9-12).

The protein localises to the cell inner membrane. The catalysed reaction is ATP + H2O + 4 H(+)(in) = ADP + phosphate + 5 H(+)(out). Functionally, produces ATP from ADP in the presence of a proton gradient across the membrane. The alpha chain is a regulatory subunit. In Chlorobium chlorochromatii (strain CaD3), this protein is ATP synthase subunit alpha.